A 157-amino-acid chain; its full sequence is Glutathione peroxidase (157 aa).

Residue Cys35 is part of the active site.

It belongs to the glutathione peroxidase family.

It catalyses the reaction 2 glutathione + H2O2 = glutathione disulfide + 2 H2O. The sequence is that of Glutathione peroxidase (gpo) from Lactococcus lactis subsp. cremoris (strain MG1363).